A 585-amino-acid chain; its full sequence is MSFQAMETFAEISQEILMSATKPPDFDFVLEQVGNYGTYQIVFFFIICLPTSLPSAFSAFNIPFVVGNPPHTCHIPEGKEYLRPLTNDTQILSCKQYNETQINVFRAFTSAPVDTYSDRISLVPCQNGWDYDNSTYLDSLVTEFNLVCDQQAWIEISTTSFYVGSFIGNCLFGYVADKFGRRRSFFVILTVLIVCGTASSFAKDIESFIILRFFTGLAFPALFQIPFIICMEFMGNSGRIFSGLMTSLFFGAAMALLGVVAMFIRRWRQLTFFCNAPFAFYIIYYFFLPESPRWSVSVGKWADAKKQLKKIAKMNGKSNVDVDELVDSMKNHQNAAEEKETKRSHNVTDLFKTPNLRRKTLIVTYIWVMNAIIYNGLTLNVSNLPVDDYWSFIINGAVELPGYFVVWPLLQCAGRRWTLAATMIVCGIGCVSAMFMPDGYPWLVASASFIGKFGVGSGFAVIYIFAGELYPTVVRAIGMGMSSMVAGSGLLLAPHIVNLGKIVKILPLLIMGLMALSAGILTFFLPETLGAPLPMTIEDAENFGKKPEPDSGMFTQAAKKRESQPLLEPHTPMDRRRRSSRLMNI.

The Cytoplasmic segment spans residues 1–40; sequence MSFQAMETFAEISQEILMSATKPPDFDFVLEQVGNYGTYQ. The helical transmembrane segment at 41–61 threads the bilayer; sequence IVFFFIICLPTSLPSAFSAFN. Topologically, residues 62–155 are extracellular; the sequence is IPFVVGNPPH…LVCDQQAWIE (94 aa). 3 N-linked (GlcNAc...) asparagine glycosylation sites follow: Asn87, Asn98, and Asn133. A helical transmembrane segment spans residues 156-176; sequence ISTTSFYVGSFIGNCLFGYVA. Residues 177 to 184 are Cytoplasmic-facing; it reads DKFGRRRS. Residues 185-205 form a helical membrane-spanning segment; that stretch reads FFVILTVLIVCGTASSFAKDI. The Extracellular segment spans residues 206–212; the sequence is ESFIILR. A helical transmembrane segment spans residues 213–233; sequence FFTGLAFPALFQIPFIICMEF. Topologically, residues 234–243 are cytoplasmic; it reads MGNSGRIFSG. The chain crosses the membrane as a helical span at residues 244–264; the sequence is LMTSLFFGAAMALLGVVAMFI. The Extracellular segment spans residues 265 to 269; the sequence is RRWRQ. The chain crosses the membrane as a helical span at residues 270–290; it reads LTFFCNAPFAFYIIYYFFLPE. Topologically, residues 291–360 are cytoplasmic; that stretch reads SPRWSVSVGK…FKTPNLRRKT (70 aa). Residues 361 to 381 traverse the membrane as a helical segment; sequence LIVTYIWVMNAIIYNGLTLNV. The Extracellular portion of the chain corresponds to 382 to 389; sequence SNLPVDDY. The helical transmembrane segment at 390–410 threads the bilayer; that stretch reads WSFIINGAVELPGYFVVWPLL. The Cytoplasmic portion of the chain corresponds to 411-416; that stretch reads QCAGRR. Residues 417–437 traverse the membrane as a helical segment; the sequence is WTLAATMIVCGIGCVSAMFMP. Residues 438–446 lie on the Extracellular side of the membrane; it reads DGYPWLVAS. Residues 447–467 form a helical membrane-spanning segment; that stretch reads ASFIGKFGVGSGFAVIYIFAG. Residues 468–476 lie on the Cytoplasmic side of the membrane; that stretch reads ELYPTVVRA. A helical transmembrane segment spans residues 477-497; sequence IGMGMSSMVAGSGLLLAPHIV. Residues 498-504 are Extracellular-facing; sequence NLGKIVK. Residues 505 to 525 traverse the membrane as a helical segment; sequence ILPLLIMGLMALSAGILTFFL. The Cytoplasmic segment spans residues 526-585; it reads PETLGAPLPMTIEDAENFGKKPEPDSGMFTQAAKKRESQPLLEPHTPMDRRRRSSRLMNI. A disordered region spans residues 544–585; sequence GKKPEPDSGMFTQAAKKRESQPLLEPHTPMDRRRRSSRLMNI. The segment covering 575–585 has biased composition (basic residues); sequence RRRRSSRLMNI.

The protein belongs to the major facilitator (TC 2.A.1) superfamily. Organic cation transporter (TC 2.A.1.19) family.

It localises to the membrane. Functionally, transports organic cations such as tetraethylammonium (TEA). Displays a broad substrate specificity. The protein is Organic cation transporter 1 (oct-1) of Caenorhabditis elegans.